The primary structure comprises 476 residues: Stromelysin-2 (476 aa).

A signal peptide spans 1–17; sequence MEPLAILVLLCFPICSA. The propeptide at 18–99 is activation peptide; sequence YPLHGAVRQD…PRCGVPDVGG (82 aa). A Cysteine switch motif is present at residues 90-97; it reads PRCGVPDV. The Zn(2+) site is built by Cys-92, His-168, Asp-170, His-183, His-196, and His-218. Glu-219 is a catalytic residue. Zn(2+) is bound by residues His-222 and His-228. Hemopexin repeat units follow at residues 286 to 335, 336 to 382, 384 to 432, and 433 to 476; these read PVKC…WPSL, PSGL…GFPP, VKKI…FPGI, and EPQV…WLLC. Cys-289 and Cys-476 are disulfide-bonded.

The protein belongs to the peptidase M10A family. Requires Zn(2+) as cofactor. The cofactor is Ca(2+).

The protein localises to the secreted. The protein resides in the extracellular space. Its subcellular location is the extracellular matrix. It carries out the reaction Similar to stromelysin 1, but action on collagen types III, IV and V is weak.. Its function is as follows. Can degrade fibronectin, gelatins of type I, III, IV, and V; weakly collagens III, IV, and V. Activates procollagenase. The polypeptide is Stromelysin-2 (Mmp10) (Rattus norvegicus (Rat)).